The primary structure comprises 115 residues: Large ribosomal subunit protein uL22 (115 aa).

Belongs to the universal ribosomal protein uL22 family. As to quaternary structure, part of the 50S ribosomal subunit.

Functionally, this protein binds specifically to 23S rRNA; its binding is stimulated by other ribosomal proteins, e.g. L4, L17, and L20. It is important during the early stages of 50S assembly. It makes multiple contacts with different domains of the 23S rRNA in the assembled 50S subunit and ribosome. In terms of biological role, the globular domain of the protein is located near the polypeptide exit tunnel on the outside of the subunit, while an extended beta-hairpin is found that lines the wall of the exit tunnel in the center of the 70S ribosome. This chain is Large ribosomal subunit protein uL22, found in Limosilactobacillus fermentum (strain NBRC 3956 / LMG 18251) (Lactobacillus fermentum).